The sequence spans 266 residues: Glutamate racemase (266 aa).

Residues 9 to 10 (DS) and 41 to 42 (YG) contribute to the substrate site. The active-site Proton donor/acceptor is the Cys73. 74-75 (NT) serves as a coordination point for substrate. The active-site Proton donor/acceptor is Cys183. 184 to 185 (TH) is a substrate binding site.

This sequence belongs to the aspartate/glutamate racemases family.

The enzyme catalyses L-glutamate = D-glutamate. The protein operates within cell wall biogenesis; peptidoglycan biosynthesis. In terms of biological role, provides the (R)-glutamate required for cell wall biosynthesis. The chain is Glutamate racemase from Shewanella woodyi (strain ATCC 51908 / MS32).